Consider the following 449-residue polypeptide: MRECISVHIGQAGVQIGNACWELYCLEHGIQPDGHMPSDKTVGGGDDSFSTFFSETGAGKHVPRAVFVDLEPTVVDEVRTGTYRQLFHPEQLITGKEDAANNYARGHYTIGKEIVDVVLDRIRKLADQCTGLQGFLVFHSFGGGTGSGFTSLLMERLSVDYGKKSKLEFSIYPAPQVSTAVVEPYNSILTTHTTLEHSDCAFMVDNEAIYDICRRNLDIERPTYMNLNRLIGQIVSSITASLRFDGALNVDLTEFQTNLVPYPRIHFPLATYAPVISVEKAYHEQLTVAEITNACFEPANQMVKCDPRRGKYMACCMLYRGDVVPKDVNAAIATIKTKRSIQFVDWCPTGFKVGINYQPPTVVPGGDLAKVQRAVCMLSNTTAIAEAWARLDHKFDLMYAKRAFVHWYVGEGMEEGEFAEAREDLAALEKDYEEVGIDSTTELGEDEEY.

A GTP-binding site is contributed by Gln11. An N6-acetyllysine modification is found at Lys40. GTP contacts are provided by Glu71, Ser140, Gly144, Thr145, Thr179, Asn206, and Asn228. Residue Glu71 coordinates Mg(2+). Glu254 is a catalytic residue.

The protein belongs to the tubulin family. Dimer of alpha and beta chains. A typical microtubule is a hollow water-filled tube with an outer diameter of 25 nm and an inner diameter of 15 nM. Alpha-beta heterodimers associate head-to-tail to form protofilaments running lengthwise along the microtubule wall with the beta-tubulin subunit facing the microtubule plus end conferring a structural polarity. Microtubules usually have 13 protofilaments but different protofilament numbers can be found in some organisms and specialized cells. It depends on Mg(2+) as a cofactor. Undergoes a tyrosination/detyrosination cycle, the cyclic removal and re-addition of a C-terminal tyrosine residue by the enzymes tubulin tyrosine carboxypeptidase (TTCP) and tubulin tyrosine ligase (TTL), respectively. In terms of processing, acetylation of alpha chains at Lys-40 stabilizes microtubules and affects affinity and processivity of microtubule motors. This modification has a role in multiple cellular functions, ranging from cell motility, cell cycle progression or cell differentiation to intracellular trafficking and signaling. During the early stages of oogenesis lky/Alpha-tubulin N-acetyltransferase 2 is the main acetyltransferase responsible for Lys-40 acetylation in germline cells while Atat/alpha-tubulin N-acetyltransferase 1 is the main acetyltransferase responsible for Lys-40 acetylation in somatic cells.

The protein resides in the cytoplasm. Its subcellular location is the cytoskeleton. It carries out the reaction GTP + H2O = GDP + phosphate + H(+). Functionally, tubulin is the major constituent of microtubules, a cylinder consisting of laterally associated linear protofilaments composed of alpha- and beta-tubulin heterodimers. Microtubules grow by the addition of GTP-tubulin dimers to the microtubule end, where a stabilizing cap forms. Below the cap, tubulin dimers are in GDP-bound state, owing to GTPase activity of alpha-tubulin. The polypeptide is Tubulin alpha-2 chain (alphaTub85E) (Drosophila melanogaster (Fruit fly)).